Reading from the N-terminus, the 397-residue chain is S-adenosylmethionine synthase (397 aa).

An ATP-binding site is contributed by His-17. Asp-19 is a Mg(2+) binding site. Residue Glu-45 participates in K(+) binding. Residues Glu-58 and Gln-101 each contribute to the L-methionine site. The interval 101–111 is flexible loop; sequence QSPDIAQGVDK. ATP-binding positions include 176 to 178, 243 to 244, Asp-252, 258 to 259, and Lys-279; these read DGK, RF, and RK. Position 252 (Asp-252) interacts with L-methionine. Lys-283 provides a ligand contact to L-methionine.

It belongs to the AdoMet synthase family. As to quaternary structure, homotetramer; dimer of dimers. The cofactor is Mg(2+). Requires K(+) as cofactor.

The protein resides in the cytoplasm. The catalysed reaction is L-methionine + ATP + H2O = S-adenosyl-L-methionine + phosphate + diphosphate. It functions in the pathway amino-acid biosynthesis; S-adenosyl-L-methionine biosynthesis; S-adenosyl-L-methionine from L-methionine: step 1/1. Its function is as follows. Catalyzes the formation of S-adenosylmethionine (AdoMet) from methionine and ATP. The overall synthetic reaction is composed of two sequential steps, AdoMet formation and the subsequent tripolyphosphate hydrolysis which occurs prior to release of AdoMet from the enzyme. The sequence is that of S-adenosylmethionine synthase from Staphylococcus aureus.